A 69-amino-acid polypeptide reads, in one-letter code: Conotoxin Lp3.1 (69 aa).

The first 20 residues, 1–20, serve as a signal peptide directing secretion; it reads MLKMGVLLFIFLVLFPLTTL. Positions 21–54 are excised as a propeptide; that stretch reads ELDTDRPVERHAAIKQDLKPQERRGIRLHAPRDE. Disulfide bonds link Cys55–Cys67, Cys56–Cys65, and Cys61–Cys68.

Belongs to the conotoxin M superfamily. In terms of tissue distribution, expressed by the venom duct.

The protein resides in the secreted. This Conus leopardus (Leopard cone) protein is Conotoxin Lp3.1.